A 359-amino-acid chain; its full sequence is UPF0283 membrane protein RHE_CH02332 (359 aa).

The interval Met1–Asp61 is disordered. Transmembrane regions (helical) follow at residues Phe77–Thr97 and Leu111–Ile131.

The protein belongs to the UPF0283 family.

Its subcellular location is the cell inner membrane. The protein is UPF0283 membrane protein RHE_CH02332 of Rhizobium etli (strain ATCC 51251 / DSM 11541 / JCM 21823 / NBRC 15573 / CFN 42).